A 408-amino-acid polypeptide reads, in one-letter code: Peptidase T (408 aa).

Residue histidine 78 participates in Zn(2+) binding. Aspartate 80 is an active-site residue. Aspartate 140 contributes to the Zn(2+) binding site. The Proton acceptor role is filled by glutamate 173. The Zn(2+) site is built by glutamate 174, aspartate 196, and histidine 379.

It belongs to the peptidase M20B family. It depends on Zn(2+) as a cofactor.

It is found in the cytoplasm. It catalyses the reaction Release of the N-terminal residue from a tripeptide.. Its function is as follows. Cleaves the N-terminal amino acid of tripeptides. This Citrobacter koseri (strain ATCC BAA-895 / CDC 4225-83 / SGSC4696) protein is Peptidase T.